The primary structure comprises 1707 residues: Chromatin-remodeling ATPase INO80 (1707 aa).

Disordered regions lie at residues 1-156 (MTGG…IGGN), 178-314 (QKPA…TMSE), 410-580 (QDEK…PLSA), 627-649 (ASKQ…QARA), and 722-748 (DASG…TIDL). The segment covering 7–16 (YNSQSPTQQP) has biased composition (polar residues). Residues 42-55 (PQTPPAFPPQPPLA) are compositionally biased toward pro residues. Polar residues-rich tracts occupy residues 86–99 (SSSQ…SGTP) and 110–124 (SVLS…NHPT). Pro residues-rich tracts occupy residues 209-226 (LPEP…PVLA) and 235-249 (TPPP…PAPL). Composition is skewed to basic and acidic residues over residues 264–284 (RLEK…ESRA), 426–463 (ENTV…ERAQ), 524–535 (SKEQKQAEKDAA), 552–572 (PKED…RSKE), 633–647 (KWQE…DTQA), and 734–746 (ETVR…DHTI). Positions 395 to 478 (ANEASVIAEV…TKRALEGVTS (84 aa)) form a coiled coil. In terms of domain architecture, DBINO spans 593–718 (IWRDIARKDI…SHFIGRKIKG (126 aa)). The stretch at 635 to 706 (QERTNKSMKD…KLNFLISQTE (72 aa)) forms a coiled coil. A Helicase ATP-binding domain is found at 847 to 1019 (VNLYEQGING…WALLHFIMPT (173 aa)). An ATP-binding site is contributed by 860–867 (DEMGLGKT). The DEAQ box motif lies at 970 to 973 (DEAQ). The 161-residue stretch at 1423-1583 (KLDELLRELK…GVDFNTRNRE (161 aa)) folds into the Helicase C-terminal domain. A disordered region spans residues 1643–1707 (EGNFDDISAK…LRLIDGDGGL (65 aa)). Over residues 1659 to 1673 (PVSTADNIATPSSTP) the composition is skewed to polar residues. Residues 1676 to 1692 (KRGRGRGTVKGSSKRAK) show a composition bias toward basic residues. Basic and acidic residues predominate over residues 1693–1707 (TTTERLRLIDGDGGL).

This sequence belongs to the SNF2/RAD54 helicase family. Component of the INO80 chromatin-remodeling complex.

The protein localises to the nucleus. The enzyme catalyses ATP + H2O = ADP + phosphate + H(+). Functionally, ATPase component of the INO80 complex which remodels chromatin by shifting nucleosomes and is involved in DNA repair. This chain is Chromatin-remodeling ATPase INO80 (ino80), found in Aspergillus clavatus (strain ATCC 1007 / CBS 513.65 / DSM 816 / NCTC 3887 / NRRL 1 / QM 1276 / 107).